The sequence spans 428 residues: MGRGVYTLALRGLAPLIWLWMWRRARRAGGQWELFAPARFGRAGARAPAPLAAPVWVHAVSLGETRAAQPLVQALLERGLPVLLTHTTATGRAEGERLFGAAIGRGQLQQAWLPYDFPGATRRFLARHAPRCGLLMEREVWPNLLAAARAQGVPMALVSARFSASSLRQAGWLGQALREALAGLDRVLAQTDEDGARLCQAGANAYTVTGSLKFDVALPEAQLRVGHAWAGATGRPVIALASTREGEDAMFIEAIGALQAHRAATPRPLILLIPRHPQRFDEAAAQLQAAGLAYARRSAGSGEPGPHIDVLLGDTLGEMPFYYAAADVAIVGGSFARLGGQNLIEACAAGTPVIVGPHTFNFKDAARDAIAAGAALRAPDARTALDWALQLLAEPARRQAMSEAARAWTAAHAGATRRTLDALEDWLG.

Glutamate 64 (proton acceptor) is an active-site residue. CMP is bound by residues 274 to 275, 316 to 318, and 342 to 345; these read PR, LGE, and NLIE.

The protein belongs to the glycosyltransferase group 1 family. Glycosyltransferase 30 subfamily.

The protein resides in the cell inner membrane. It catalyses the reaction lipid IVA (E. coli) + CMP-3-deoxy-beta-D-manno-octulosonate = alpha-Kdo-(2-&gt;6)-lipid IVA (E. coli) + CMP + H(+). It participates in bacterial outer membrane biogenesis; LPS core biosynthesis. In terms of biological role, involved in lipopolysaccharide (LPS) biosynthesis. Catalyzes the transfer of a single 3-deoxy-D-manno-octulosonate (Kdo) residue from CMP-Kdo to lipid IV(A), the tetraacyldisaccharide-1,4'-bisphosphate precursor of lipid A. The protein is 3-deoxy-D-manno-octulosonic acid transferase (waaA) of Bordetella pertussis.